The chain runs to 364 residues: GDSL esterase/lipase At1g29660 (364 aa).

A signal peptide spans 1–26 (MESYLRKWCLVSVWVLLLGLGFKVKA). The active-site Nucleophile is the Ser39. Catalysis depends on charge relay system residues Asp328 and His331.

The protein belongs to the 'GDSL' lipolytic enzyme family. In terms of tissue distribution, found in phloem exudates.

Its subcellular location is the secreted. It is found in the extracellular space. It localises to the apoplast. Functionally, involved in EDS1-dependent systemic acquired resistance, maybe in phloem-mediated long-distance signaling. This is GDSL esterase/lipase At1g29660 from Arabidopsis thaliana (Mouse-ear cress).